A 374-amino-acid polypeptide reads, in one-letter code: 4-hydroxybenzoate polyprenyltransferase, mitochondrial (374 aa).

The transit peptide at 1–63 (MLRLGGAGLV…RALSLSAAAV (63 aa)) directs the protein to the mitochondrion. Residues 64–83 (VNSAPRPLQPYLRLMRLDKP) lie on the Mitochondrial matrix side of the membrane. The chain crosses the membrane as a helical span at residues 84 to 104 (IGTWLLYLPCTWSIGLAADPG). Residues 105–108 (CFPD) are Mitochondrial intermembrane-facing. A helical transmembrane segment spans residues 109 to 129 (WYMLSLFGTGAILMRGAGCTI). The Mitochondrial matrix portion of the chain corresponds to 130 to 153 (NDMWDRDFDKKVERTANRPIAAGD). A helical transmembrane segment spans residues 154–174 (ISAFQSFVFLGAQLTLALGVL). Residues 175–176 (LH) are Mitochondrial intermembrane-facing. The helical transmembrane segment at 177–197 (LNYYSIAMGAASLLLVVTYPL) threads the bilayer. Over 198–200 (MKR) the chain is Mitochondrial matrix. The helical transmembrane segment at 201–221 (VTFWPQLALGLTFNWGALLGW) threads the bilayer. At 222 to 230 (SAVKGSCDP) the chain is on the mitochondrial intermembrane side. A helical transmembrane segment spans residues 231 to 251 (AVCLPLYFSGVMWTLIYDTIY). Over 252–277 (AHQDKKDDALIGLKSTALLFRENTKQ) the chain is Mitochondrial matrix. Residues 278–298 (WLSGFGVAMVGALSLVGASSG) form a helical membrane-spanning segment. At 299-300 (QT) the chain is on the mitochondrial intermembrane side. Residues 301 to 321 (LPYYAAVAAVGAHLAHQIYTV) traverse the membrane as a helical segment. Over 322-332 (DIHRAEDCWEK) the chain is Mitochondrial matrix. A helical membrane pass occupies residues 333-353 (FTSNRTVGLLLFLGIVLGNLY). Topologically, residues 354–374 (KDKPDETKGVDAVGEESERTS) are mitochondrial intermembrane.

It belongs to the UbiA prenyltransferase family. The cofactor is Mg(2+).

It localises to the mitochondrion inner membrane. The enzyme catalyses an all-trans-polyprenyl diphosphate + 4-hydroxybenzoate = a 4-hydroxy-3-(all-trans-polyprenyl)benzoate + diphosphate. The catalysed reaction is all-trans-decaprenyl diphosphate + 4-hydroxybenzoate = 4-hydroxy-3-(all-trans-decaprenyl)benzoate + diphosphate. It catalyses the reaction all-trans-nonaprenyl diphosphate + 4-hydroxybenzoate = 4-hydroxy-3-(all-trans-nonaprenyl)benzoate + diphosphate. It functions in the pathway cofactor biosynthesis; ubiquinone biosynthesis. Mediates the second step in the final reaction sequence of coenzyme Q (CoQ) biosynthesis. Catalyzes the prenylation of para-hydroxybenzoate (PHB) with an all-trans polyprenyl group (such as all-trans-nonaprenyl diphosphate). The length of the polyprenyl side chain varies depending on the species, in humans, the side chain is comprised of 10 isoprenyls producing CoQ10 (also known as ubiquinone), whereas rodents predominantly generate CoQ9. However, this specificity is not complete, human tissues have low amounts of CoQ9 and rodent organs contain some CoQ10. Plays a central role in the biosynthesis of CoQ9. CoQ9 is a vital molecule that transports electrons from mitochondrial respiratory chain complexes. CoQs also function as cofactors for uncoupling protein and plays a role as regulator of the extracellularly-induced ceramide-dependent apoptotic pathway. Regulates mitochondrial permeability transition pore (mPTP) opening and ROS production (pivotal events in cell death) in a tissue specific manner. This Rattus norvegicus (Rat) protein is 4-hydroxybenzoate polyprenyltransferase, mitochondrial.